The primary structure comprises 1024 residues: Multidrug resistance protein MdtC (1024 aa).

A run of 12 helical transmembrane segments spans residues 12 to 32 (VATT…FSLL), 333 to 353 (EVER…FIFL), 360 to 380 (LIPA…MYLC), 387 to 407 (LSLM…IVVL), 435 to 455 (VLSM…MAGL), 469 to 489 (VAIG…CAWL), 528 to 548 (WVMV…ISIP), 853 to 873 (LWLI…LYES), 875 to 895 (VHPL…LLAL), 897 to 917 (LFDA…IGIV), 953 to 973 (PIIM…LSSG), and 984 to 1004 (ITIV…TPVI).

Belongs to the resistance-nodulation-cell division (RND) (TC 2.A.6) family. MdtC subfamily. In terms of assembly, part of a tripartite efflux system composed of MdtA, MdtB and MdtC. MdtC forms a heteromultimer with MdtB.

Its subcellular location is the cell inner membrane. The polypeptide is Multidrug resistance protein MdtC (Yersinia pseudotuberculosis serotype IB (strain PB1/+)).